The following is a 461-amino-acid chain: Putative cytochrome P450 132 (461 aa).

C409 is a heme binding site.

The protein belongs to the cytochrome P450 family. Heme is required as a cofactor.

The sequence is that of Putative cytochrome P450 132 (cyp132) from Mycobacterium bovis (strain ATCC BAA-935 / AF2122/97).